We begin with the raw amino-acid sequence, 330 residues long: Methionyl-tRNA formyltransferase (330 aa).

Position 121 to 124 (121 to 124) interacts with (6S)-5,6,7,8-tetrahydrofolate; it reads SLLP.

It belongs to the Fmt family.

The enzyme catalyses L-methionyl-tRNA(fMet) + (6R)-10-formyltetrahydrofolate = N-formyl-L-methionyl-tRNA(fMet) + (6S)-5,6,7,8-tetrahydrofolate + H(+). Functionally, attaches a formyl group to the free amino group of methionyl-tRNA(fMet). The formyl group appears to play a dual role in the initiator identity of N-formylmethionyl-tRNA by promoting its recognition by IF2 and preventing the misappropriation of this tRNA by the elongation apparatus. The chain is Methionyl-tRNA formyltransferase from Burkholderia orbicola (strain MC0-3).